Reading from the N-terminus, the 429-residue chain is WRKY transcription factor 44 (429 aa).

The WRKY 1 DNA-binding region spans 159-223; sequence TGDRSSVDGY…YQGEHNHSKP (65 aa). Zn(2+) contacts are provided by C190, C195, H218, and H220. 2 disordered regions span residues 214 to 279 and 292 to 348; these read YQGE…RTEK and AVPR…SDSL. Composition is skewed to polar residues over residues 254–275, 295–313, and 334–345; these read QDPN…STQN, RSTN…SSQC, and SEAGVSQGSVES. The WRKY 2 DNA-binding region spans 343–408; sequence VESDSLEDGF…YEGKHNHHLL (66 aa). Zn(2+) is bound by residues C374, C379, H403, and H405. The span at 410–422 shows a compositional bias: low complexity; sequence SPPSSSTLPFNSP. Positions 410–429 are disordered; sequence SPPSSSTLPFNSPQLSKQTI.

The protein belongs to the WRKY group I family. In terms of tissue distribution, leaf promordia, trichomes, atrichoblasts, fertilized eggs, seed coat.

Its subcellular location is the nucleus. Transcription factor. Interacts specifically with the W box (5'-(T)TGAC[CT]-3'), a frequently occurring elicitor-responsive cis-acting element. Regulates trichome development, production of mucilage and tannin in seed coats, and maybe root hair development. The protein is WRKY transcription factor 44 (WRKY44) of Arabidopsis thaliana (Mouse-ear cress).